A 374-amino-acid chain; its full sequence is PqqA peptide cyclase (374 aa).

Residues 13 to 230 enclose the Radical SAM core domain; sequence VPAPIAMLAE…EAEARLRGTL (218 aa). The [4Fe-4S] cluster site is built by Cys-27, Cys-31, and Cys-34.

Belongs to the radical SAM superfamily. PqqE family. Interacts with PqqD. The interaction is necessary for activity of PqqE. [4Fe-4S] cluster serves as cofactor.

It carries out the reaction [PQQ precursor protein] + S-adenosyl-L-methionine = E-Y cross-linked-[PQQ precursor protein] + 5'-deoxyadenosine + L-methionine + H(+). It functions in the pathway cofactor biosynthesis; pyrroloquinoline quinone biosynthesis. Functionally, catalyzes the cross-linking of a glutamate residue and a tyrosine residue in the PqqA protein as part of the biosynthesis of pyrroloquinoline quinone (PQQ). The protein is PqqA peptide cyclase of Ruegeria pomeroyi (strain ATCC 700808 / DSM 15171 / DSS-3) (Silicibacter pomeroyi).